A 113-amino-acid polypeptide reads, in one-letter code: Na(+)/H(+) antiporter subunit C (113 aa).

The next 3 helical transmembrane spans lie at 4–21, 28–47, and 67–89; these read LMAVLAGIIFMAATYLLL, VIIGTALLSHGVHLMLLTMG, and PLPQALILTAIVISFGVTSFILV.

It belongs to the CPA3 antiporters (TC 2.A.63) subunit C family. Forms a heterooligomeric complex that consists of seven subunits: MrpA, MrpB, MrpC, MrpD, MrpE, MrpF and MrpG.

The protein localises to the cell membrane. Mrp complex is a Na(+)/H(+) antiporter that is considered to be the major Na(+) excretion system in B.subtilis. Has a major role in Na(+) resistance and a minor role in Na(+)- and K(+)-dependent pH homeostasis as compared to TetB. MrpA may be the actual Na(+)/H(+) antiporter, although the six other Mrp proteins are all required for Na(+)/H(+) antiport activity and Na(+) resistance. MrpA is required for initiation of sporulation when external Na(+) concentration increases. Also transports Li(+) but not K(+), Ca(2+) or Mg(2+). This is Na(+)/H(+) antiporter subunit C (mrpC) from Bacillus subtilis (strain 168).